The chain runs to 140 residues: ATP synthase epsilon chain (140 aa).

The protein belongs to the ATPase epsilon chain family. As to quaternary structure, F-type ATPases have 2 components, CF(1) - the catalytic core - and CF(0) - the membrane proton channel. CF(1) has five subunits: alpha(3), beta(3), gamma(1), delta(1), epsilon(1). CF(0) has three main subunits: a, b and c.

Its subcellular location is the cell inner membrane. In terms of biological role, produces ATP from ADP in the presence of a proton gradient across the membrane. The chain is ATP synthase epsilon chain from Colwellia psychrerythraea (strain 34H / ATCC BAA-681) (Vibrio psychroerythus).